The sequence spans 32 residues: Photosystem II reaction center protein Psb30 (32 aa).

The helical transmembrane segment at 3–23 threads the bilayer; the sequence is IVIVQLGSLALITLAGPIIIV.

The protein belongs to the Psb30/Ycf12 family. In terms of assembly, PSII is composed of 1 copy each of membrane proteins PsbA, PsbB, PsbC, PsbD, PsbE, PsbF, PsbH, PsbI, PsbJ, PsbK, PsbL, PsbM, PsbT, PsbY, PsbZ, Psb30/Ycf12, peripheral proteins of the oxygen-evolving complex and a large number of cofactors. It forms dimeric complexes.

It is found in the plastid. It localises to the chloroplast thylakoid membrane. Functionally, a core subunit of photosystem II (PSII), probably helps stabilize the reaction center. The polypeptide is Photosystem II reaction center protein Psb30 (Euglena viridis (Cercaria viridis)).